The sequence spans 539 residues: MAAKEVKFASDARDRMLRGVDTLANAVKVTLGPKGRNVVIEKSFGAPRITKDGVTVAKEIELADKFENMGAQMLREVASKQNDKAGDGTTTATVLAQAIVREGSKAVAAGMNPMDVKRGIDLAVKAVVKDLETHAKKVSANSEIAQVATISANGDEEVGRILAEAMDKVGNEGVITVEEAKSLATELETVEGMQFDRGYLSPYFITNAEKLKVELDDPYILIHEKKLSNLQAMLPLLEAVVQSGKPLLIIAEDVEGEALATLVVNRLRGGLKVAAVKAPGFGDRRKAMLEDIAILTGGNVVSEDLGIKLENVTVNMLGRAKKVVIDKDNTTIVDGVGARTDIDARIAQIRQQIDTTTSDYDREKLQERLAKLAGGVAVIRVGGATEVEVKERKDRVDDALHATRAAVEEGILPGGGIALLRALKALDGLKAANDDQQSGIDIVRRALRAPARQIADNAGEDGAWIVGKLLESSDYNWGFNAATGEYEDLVKAGVIDPAKVVRTALQDAASVAALLITTEALVAELPKEEKAAPMPAMDF.

Residues 30–33, Lys-51, 87–91, Gly-415, 480–482, and Asp-496 each bind ATP; these read TLGP, DGTTT, and NAA.

It belongs to the chaperonin (HSP60) family. Forms a cylinder of 14 subunits composed of two heptameric rings stacked back-to-back. Interacts with the co-chaperonin GroES.

Its subcellular location is the cytoplasm. It catalyses the reaction ATP + H2O + a folded polypeptide = ADP + phosphate + an unfolded polypeptide.. Together with its co-chaperonin GroES, plays an essential role in assisting protein folding. The GroEL-GroES system forms a nano-cage that allows encapsulation of the non-native substrate proteins and provides a physical environment optimized to promote and accelerate protein folding. This chain is Chaperonin GroEL 2, found in Sphingopyxis alaskensis (strain DSM 13593 / LMG 18877 / RB2256) (Sphingomonas alaskensis).